Reading from the N-terminus, the 412-residue chain is Gamma-glutamyl phosphate reductase (412 aa).

This sequence belongs to the gamma-glutamyl phosphate reductase family.

It is found in the cytoplasm. It catalyses the reaction L-glutamate 5-semialdehyde + phosphate + NADP(+) = L-glutamyl 5-phosphate + NADPH + H(+). Its pathway is amino-acid biosynthesis; L-proline biosynthesis; L-glutamate 5-semialdehyde from L-glutamate: step 2/2. Catalyzes the NADPH-dependent reduction of L-glutamate 5-phosphate into L-glutamate 5-semialdehyde and phosphate. The product spontaneously undergoes cyclization to form 1-pyrroline-5-carboxylate. This chain is Gamma-glutamyl phosphate reductase, found in Streptococcus suis (strain 98HAH33).